We begin with the raw amino-acid sequence, 474 residues long: Tubulin gamma-1 chain (474 aa).

GTP is bound at residue 142-148 (AGGTGSG).

Belongs to the tubulin family. As to quaternary structure, gamma-tubulin complex is composed of gamma-tubulin and GCP proteins.

The protein resides in the cytoplasm. It is found in the cytoskeleton. The protein localises to the microtubule organizing center. It localises to the nucleus. Its subcellular location is the cell cortex. Tubulin is the major constituent of microtubules. The gamma chain is found at microtubule organizing centers (MTOC) such as the spindle poles, suggesting that it is involved in the minus-end nucleation of microtubule assembly. Functionally, gamma-tubulin complex is essential for the control of microtubular network remodeling in the course of initiation and development of giant-feeding cells, and for the successful reproduction of nematodes (e.g. Meloidogyne spp.) in their plant hosts. The polypeptide is Tubulin gamma-1 chain (TUBG1) (Arabidopsis thaliana (Mouse-ear cress)).